Here is a 185-residue protein sequence, read N- to C-terminus: QPITESQRLFSIAVSRVQNLHLLAQRLFSDFESSLQTQEQRQLNKIFLQDFCNSDYIISPIDKHETQRSSVLKLLSISYRLVESWEFPSRSLSGAQRNQISEKLSDLKMGIQLLIRANQDGAEMFADSSALQLAPYGNYYQSLGGDESLRRNYELLACFKKDMHKVETYLMVAKCRLSPEANCTL.

A disulfide bridge connects residues C52 and C158. Zn(2+) is bound at residue E167. A disulfide bridge links C175 with C183.

It belongs to the somatotropin/prolactin family.

Its subcellular location is the secreted. Its function is as follows. Growth hormone plays an important role in growth control and is involved in the regulation of several anabolic processes. Implicated as an osmoregulatory substance important for seawater adaptation. This is Somatotropin (gh) from Katsuwonus pelamis (Skipjack tuna).